Reading from the N-terminus, the 767-residue chain is Photosystem I P700 chlorophyll a apoprotein A1 (767 aa).

8 helical membrane-spanning segments follow: residues isoleucine 72–alanine 95, leucine 158–histidine 181, leucine 197–leucine 221, isoleucine 305–tyrosine 323, tryptophan 364–tyrosine 387, isoleucine 403–valine 429, alanine 451–histidine 473, and phenylalanine 548–leucine 566. 2 residues coordinate [4Fe-4S] cluster: cysteine 590 and cysteine 599. 2 helical membrane-spanning segments follow: residues histidine 606–tryptophan 627 and threonine 681–phenylalanine 703. Histidine 692 provides a ligand contact to chlorophyll a'. Methionine 700 and tyrosine 708 together coordinate chlorophyll a. Tryptophan 709 lines the phylloquinone pocket. A helical transmembrane segment spans residues alanine 741–alanine 761.

The protein belongs to the PsaA/PsaB family. As to quaternary structure, the PsaA/B heterodimer binds the P700 chlorophyll special pair and subsequent electron acceptors. PSI consists of a core antenna complex that captures photons, and an electron transfer chain that converts photonic excitation into a charge separation. The cyanobacterial PSI reaction center is composed of one copy each of PsaA,B,C,D,E,F,I,J,K,L,M and X, and forms trimeric complexes. PSI electron transfer chain: 5 chlorophyll a, 1 chlorophyll a', 2 phylloquinones and 3 4Fe-4S clusters. PSI core antenna: 90 chlorophyll a, 22 carotenoids, 3 phospholipids and 1 galactolipid. P700 is a chlorophyll a/chlorophyll a' dimer, A0 is one or more chlorophyll a, A1 is one or both phylloquinones and FX is a shared 4Fe-4S iron-sulfur center. is required as a cofactor.

Its subcellular location is the cellular thylakoid membrane. The enzyme catalyses reduced [plastocyanin] + hnu + oxidized [2Fe-2S]-[ferredoxin] = oxidized [plastocyanin] + reduced [2Fe-2S]-[ferredoxin]. PsaA and PsaB bind P700, the primary electron donor of photosystem I (PSI), as well as the electron acceptors A0, A1 and FX. PSI is a plastocyanin/cytochrome c6-ferredoxin oxidoreductase, converting photonic excitation into a charge separation, which transfers an electron from the donor P700 chlorophyll pair to the spectroscopically characterized acceptors A0, A1, FX, FA and FB in turn. Oxidized P700 is reduced on the lumenal side of the thylakoid membrane by plastocyanin or cytochrome c6. The chain is Photosystem I P700 chlorophyll a apoprotein A1 from Synechococcus sp. (strain CC9902).